The following is a 123-amino-acid chain: Large ribosomal subunit protein bL12 (123 aa).

It belongs to the bacterial ribosomal protein bL12 family. In terms of assembly, homodimer. Part of the ribosomal stalk of the 50S ribosomal subunit. Forms a multimeric L10(L12)X complex, where L10 forms an elongated spine to which 2 to 4 L12 dimers bind in a sequential fashion. Binds GTP-bound translation factors.

Its function is as follows. Forms part of the ribosomal stalk which helps the ribosome interact with GTP-bound translation factors. Is thus essential for accurate translation. The polypeptide is Large ribosomal subunit protein bL12 (Psychrobacter arcticus (strain DSM 17307 / VKM B-2377 / 273-4)).